The chain runs to 285 residues: Ribosomal protein L11 methyltransferase (285 aa).

4 residues coordinate S-adenosyl-L-methionine: T131, G154, D176, and N223.

It belongs to the methyltransferase superfamily. PrmA family.

The protein localises to the cytoplasm. The enzyme catalyses L-lysyl-[protein] + 3 S-adenosyl-L-methionine = N(6),N(6),N(6)-trimethyl-L-lysyl-[protein] + 3 S-adenosyl-L-homocysteine + 3 H(+). Methylates ribosomal protein L11. This chain is Ribosomal protein L11 methyltransferase, found in Brucella abortus (strain S19).